A 510-amino-acid polypeptide reads, in one-letter code: Probable cytochrome P450 517A2 (510 aa).

The helical transmembrane segment at 1-21 threads the bilayer; it reads MRILIIIILIIIVFLVKDTIK. Cysteine 450 lines the heme pocket.

It belongs to the cytochrome P450 family. It depends on heme as a cofactor.

Its subcellular location is the membrane. The sequence is that of Probable cytochrome P450 517A2 (cyp517A2) from Dictyostelium discoideum (Social amoeba).